Here is a 422-residue protein sequence, read N- to C-terminus: Putative polyketide beta-ketoacyl synthase 1 (422 aa).

Residues 2–416 form the Ketosynthase family 3 (KS3) domain; sequence TRRVAVTGIG…GFQSAVLLTG (415 aa). Active-site for beta-ketoacyl synthase activity residues include Cys169, His309, and His346.

This sequence belongs to the thiolase-like superfamily. Beta-ketoacyl-ACP synthases family.

Its pathway is antibiotic biosynthesis; curamycin biosynthesis. The chain is Putative polyketide beta-ketoacyl synthase 1 (curA) from Streptomyces cyaneus (Streptomyces curacoi).